An 87-amino-acid polypeptide reads, in one-letter code: UPF0250 protein BUAPTUC7_482 (87 aa).

It belongs to the UPF0250 family.

The chain is UPF0250 protein BUAPTUC7_482 from Buchnera aphidicola subsp. Acyrthosiphon pisum (strain Tuc7).